The primary structure comprises 384 residues: WAT1-related protein At4g08290 (384 aa).

A run of 10 helical transmembrane segments spans residues 15–35, 43–63, 73–93, 104–124, 140–160, 186–206, 219–239, 255–275, 282–302, and 307–327; these read LLMIFLQFGAAGTYIVIMATL, VVIVYRNLVAALVLAPFALIF, LSVLWKIMALGFLEPVLDQGF, TYTSAIMNILPSVTFIIAWIL, IIGTLVGLGGALVMTLYKGPL, WVVGTLLILLGCVAWSGFYVL, SLSALICLAGAVQSFAVALVV, FAPLYTGIVSSGITYYVQGMV, VFVTAFNPLCMILVALIASFI, and IHFGCVIGGAVIAAGLYMVVW. EamA domains are found at residues 25–154 and 198–326; these read AGTY…LVMT and VAWS…YMVV.

It belongs to the drug/metabolite transporter (DMT) superfamily. Plant drug/metabolite exporter (P-DME) (TC 2.A.7.4) family.

It localises to the membrane. This chain is WAT1-related protein At4g08290, found in Arabidopsis thaliana (Mouse-ear cress).